Consider the following 284-residue polypeptide: Cell wall mannoprotein 1 (284 aa).

The signal sequence occupies residues 1–17 (MRFSALLVTLGLTGALA). The span at 176–234 (SSTGTASSSAPATETATATETSTATGTVTETATSTPVIPTGTASGSASATPSTTATPTT) shows a compositional bias: low complexity. The segment at 176-252 (SSTGTASSSA…SSTGTATAST (77 aa)) is disordered.

This sequence belongs to the cell wall mannoprotein 1 family. Post-translationally, galactomannoprotein, glycosylated.

The protein resides in the secreted. It localises to the cell wall. Functionally, constitutive protein of the cell wall. Antigen target of host humoral immune response. The sequence is that of Cell wall mannoprotein 1 from Aspergillus fumigatus (Neosartorya fumigata).